A 209-amino-acid chain; its full sequence is Small ribosomal subunit protein uS5 (209 aa).

In terms of domain architecture, S5 DRBM spans 48–111 (LEDEVLDINM…DAAKLNITYI (64 aa)).

It belongs to the universal ribosomal protein uS5 family. In terms of assembly, part of the 30S ribosomal subunit. Contacts protein S4.

Its function is as follows. With S4 and S12 plays an important role in translational accuracy. The protein is Small ribosomal subunit protein uS5 of Methanosarcina acetivorans (strain ATCC 35395 / DSM 2834 / JCM 12185 / C2A).